The primary structure comprises 182 residues: Adenylate kinase (182 aa).

Residue 12–17 coordinates ATP; that stretch reads GAGKGT. The NMP stretch occupies residues 32–61; it reads STGDLLRDEVSSGSVLGIKAAEIMNKGELV. Residues T33, R38, 59–61, 85–88, and Q92 each bind AMP; these read ELV and GFPR. The interval 126 to 132 is LID; that stretch reads ERGRQDD. R127 provides a ligand contact to ATP. AMP contacts are provided by R129 and R140. A168 contacts ATP.

It belongs to the adenylate kinase family. As to quaternary structure, monomer.

It is found in the cytoplasm. The catalysed reaction is AMP + ATP = 2 ADP. It functions in the pathway purine metabolism; AMP biosynthesis via salvage pathway; AMP from ADP: step 1/1. Its function is as follows. Catalyzes the reversible transfer of the terminal phosphate group between ATP and AMP. Plays an important role in cellular energy homeostasis and in adenine nucleotide metabolism. The protein is Adenylate kinase of Prochlorococcus marinus (strain NATL2A).